A 185-amino-acid chain; its full sequence is Elongation factor P (185 aa).

This sequence belongs to the elongation factor P family.

Its subcellular location is the cytoplasm. The protein operates within protein biosynthesis; polypeptide chain elongation. In terms of biological role, involved in peptide bond synthesis. Stimulates efficient translation and peptide-bond synthesis on native or reconstituted 70S ribosomes in vitro. Probably functions indirectly by altering the affinity of the ribosome for aminoacyl-tRNA, thus increasing their reactivity as acceptors for peptidyl transferase. This chain is Elongation factor P, found in Mesomycoplasma hyopneumoniae (strain 7448) (Mycoplasma hyopneumoniae).